A 350-amino-acid polypeptide reads, in one-letter code: Kievitone hydratase (350 aa).

The N-terminal stretch at 1-19 (MMISSVLVAGVVAVSAALA) is a signal peptide.

In terms of assembly, homodimer. Post-translationally, glycosylated.

The protein localises to the secreted. The enzyme catalyses kievitone hydrate = kievitone + H2O. Converts fungitoxic kievitone to the less toxic kievitone hydrate, and thereby protects the pathogenic fungus against this phytoalexin. This Fusarium solani subsp. phaseoli (Nectria haematococca) protein is Kievitone hydratase (khs).